A 441-amino-acid polypeptide reads, in one-letter code: Homoserine dehydrogenase (441 aa).

Asparagine 17 and valine 18 together coordinate NADP(+). Residues valine 18 and glycine 47 each contribute to the NAD(+) site. Valine 18 provides a ligand contact to NADPH. Residues arginine 49, arginine 50, and lysine 107 each contribute to the NADP(+) site. Arginine 49 contacts NADPH. Lysine 107 provides a ligand contact to NADPH. Residues glutamate 131, valine 134, glycine 136, and isoleucine 138 each coordinate Na(+). Positions 189 and 192 each coordinate NADP(+). L-homoserine is bound by residues glutamate 192 and aspartate 203. The Proton donor role is filled by lysine 207. Glycine 309 contributes to the NADP(+) binding site. Glycine 309 provides a ligand contact to NAD(+). Glycine 309 is an NADPH binding site. In terms of domain architecture, ACT spans 356 to 435 (YVSMNVADKP…VVQGVTSVLR (80 aa)).

It belongs to the homoserine dehydrogenase family. Requires a metal cation as cofactor.

It catalyses the reaction L-homoserine + NADP(+) = L-aspartate 4-semialdehyde + NADPH + H(+). It carries out the reaction L-homoserine + NAD(+) = L-aspartate 4-semialdehyde + NADH + H(+). Its pathway is amino-acid biosynthesis; L-methionine biosynthesis via de novo pathway; L-homoserine from L-aspartate: step 3/3. The protein operates within amino-acid biosynthesis; L-threonine biosynthesis; L-threonine from L-aspartate: step 3/5. Its function is as follows. Catalyzes the conversion of L-aspartate-beta-semialdehyde (L-Asa) to L-homoserine (L-Hse), the third step in the biosynthesis of threonine and methionine from aspartate. The protein is Homoserine dehydrogenase (hom) of Mycobacterium leprae (strain TN).